A 281-amino-acid chain; its full sequence is Putrescine transport system permease protein PotI (281 aa).

Residues 1–13 (MNNLPVVRSPWRI) are Cytoplasmic-facing. The chain crosses the membrane as a helical span at residues 14–33 (VILLLGFTFLYAPMLMLVIY). The Periplasmic segment spans residues 34 to 68 (SFNSSKLVTVWAGWSTRWYGELLRDDAMMSAVGLS). The 196-residue stretch at 65 to 260 (VGLSLTIAAC…GAVGIVGFIA (196 aa)) folds into the ABC transmembrane type-1 domain. A helical membrane pass occupies residues 69–88 (LTIAACAATAAAILGTIAAV). Residues 89 to 115 (VLVRFGRFRGSNGFAFMITAPLVMPDV) lie on the Cytoplasmic side of the membrane. Residues 116-135 (ITGLSLLLLFVALAHAIGWP) traverse the membrane as a helical segment. The Periplasmic segment spans residues 136-140 (ADRGM). Residues 141-160 (LTIWLAHVTFCTAYVAVVIS) form a helical membrane-spanning segment. Over 161-186 (SRLRELDRSIEEAAMDLGATPLKVFF) the chain is Cytoplasmic. A helical transmembrane segment spans residues 187–206 (VITLPMIMPAIISGWLLAFT). Residues 207–243 (LSLDDLVIASFVSGPGATTLPMLVFSSVRMGVNPEIN) are Periplasmic-facing. Residues 244-263 (ALATLILGAVGIVGFIAWYL) traverse the membrane as a helical segment. Topologically, residues 264-281 (MARAEKQRIRDIQRARRG) are cytoplasmic.

It belongs to the binding-protein-dependent transport system permease family. CysTW subfamily. As to quaternary structure, the complex is composed of two ATP-binding proteins (PotG), two transmembrane proteins (PotH and PotI) and a solute-binding protein (PotF).

The protein resides in the cell inner membrane. In terms of biological role, part of the ABC transporter complex PotFGHI involved in putrescine uptake. Responsible for the translocation of the substrate across the membrane. The sequence is that of Putrescine transport system permease protein PotI from Escherichia coli O6:H1 (strain CFT073 / ATCC 700928 / UPEC).